We begin with the raw amino-acid sequence, 358 residues long: 3-dehydroquinate synthase (358 aa).

Residues D70–K75, G104–D108, T128–T129, K141, K150, and C168–T171 each bind NAD(+). Residues E183, H246, and H263 each coordinate Zn(2+).

The protein belongs to the sugar phosphate cyclases superfamily. Dehydroquinate synthase family. Co(2+) serves as cofactor. It depends on Zn(2+) as a cofactor. The cofactor is NAD(+).

The protein resides in the cytoplasm. It catalyses the reaction 7-phospho-2-dehydro-3-deoxy-D-arabino-heptonate = 3-dehydroquinate + phosphate. The protein operates within metabolic intermediate biosynthesis; chorismate biosynthesis; chorismate from D-erythrose 4-phosphate and phosphoenolpyruvate: step 2/7. Functionally, catalyzes the conversion of 3-deoxy-D-arabino-heptulosonate 7-phosphate (DAHP) to dehydroquinate (DHQ). The sequence is that of 3-dehydroquinate synthase from Shewanella baltica (strain OS185).